The following is a 63-amino-acid chain: Cecropin-A (63 aa).

Residues 1–22 (MNFVRILSFVFALVLALGAVSA) form the signal peptide. The propeptide occupies 23–26 (APEP). Residue leucine 61 is modified to Leucine amide.

Belongs to the cecropin family. As to expression, highest expression in fat body and hemocytes. Is also expressed in Malpighian tubules and to a much lesser extent in midgut. Not present in silk gland.

It is found in the secreted. Cecropins have lytic and antibacterial activity against several Gram-positive and Gram-negative bacteria. This chain is Cecropin-A (CECA), found in Bombyx mori (Silk moth).